The primary structure comprises 410 residues: Probable tRNA sulfurtransferase (410 aa).

A THUMP domain is found at 58–167; sequence AELTRRLQEV…RREIFVSVER (110 aa). ATP is bound by residues 185 to 186, 210 to 211, Arg-267, Gly-289, and Gln-298; these read LL and HF.

The protein belongs to the ThiI family.

It localises to the cytoplasm. It carries out the reaction [ThiI sulfur-carrier protein]-S-sulfanyl-L-cysteine + a uridine in tRNA + 2 reduced [2Fe-2S]-[ferredoxin] + ATP + H(+) = [ThiI sulfur-carrier protein]-L-cysteine + a 4-thiouridine in tRNA + 2 oxidized [2Fe-2S]-[ferredoxin] + AMP + diphosphate. The enzyme catalyses [ThiS sulfur-carrier protein]-C-terminal Gly-Gly-AMP + S-sulfanyl-L-cysteinyl-[cysteine desulfurase] + AH2 = [ThiS sulfur-carrier protein]-C-terminal-Gly-aminoethanethioate + L-cysteinyl-[cysteine desulfurase] + A + AMP + 2 H(+). It functions in the pathway cofactor biosynthesis; thiamine diphosphate biosynthesis. In terms of biological role, catalyzes the ATP-dependent transfer of a sulfur to tRNA to produce 4-thiouridine in position 8 of tRNAs, which functions as a near-UV photosensor. Also catalyzes the transfer of sulfur to the sulfur carrier protein ThiS, forming ThiS-thiocarboxylate. This is a step in the synthesis of thiazole, in the thiamine biosynthesis pathway. The sulfur is donated as persulfide by IscS. This is Probable tRNA sulfurtransferase from Nocardia farcinica (strain IFM 10152).